Here is a 254-residue protein sequence, read N- to C-terminus: Leucyl/phenylalanyl-tRNA--protein transferase (254 aa).

The protein belongs to the L/F-transferase family.

The protein localises to the cytoplasm. The catalysed reaction is N-terminal L-lysyl-[protein] + L-leucyl-tRNA(Leu) = N-terminal L-leucyl-L-lysyl-[protein] + tRNA(Leu) + H(+). The enzyme catalyses N-terminal L-arginyl-[protein] + L-leucyl-tRNA(Leu) = N-terminal L-leucyl-L-arginyl-[protein] + tRNA(Leu) + H(+). It carries out the reaction L-phenylalanyl-tRNA(Phe) + an N-terminal L-alpha-aminoacyl-[protein] = an N-terminal L-phenylalanyl-L-alpha-aminoacyl-[protein] + tRNA(Phe). Functions in the N-end rule pathway of protein degradation where it conjugates Leu, Phe and, less efficiently, Met from aminoacyl-tRNAs to the N-termini of proteins containing an N-terminal arginine or lysine. This is Leucyl/phenylalanyl-tRNA--protein transferase from Burkholderia multivorans (strain ATCC 17616 / 249).